The primary structure comprises 432 residues: Adenylosuccinate synthetase (432 aa).

Residues 12–18 (GDEGKGK) and 40–42 (GHT) each bind GTP. Catalysis depends on Asp-13, which acts as the Proton acceptor. The Mg(2+) site is built by Asp-13 and Gly-40. IMP-binding positions include 13-16 (DEGK), 38-41 (NAGH), Thr-132, Arg-146, Gln-226, Thr-241, and Arg-305. His-41 acts as the Proton donor in catalysis. Residue 301–307 (TVTGRKR) coordinates substrate. Residues Arg-307, 333–335 (KLD), and 415–417 (STS) contribute to the GTP site.

The protein belongs to the adenylosuccinate synthetase family. As to quaternary structure, homodimer. Requires Mg(2+) as cofactor.

The protein localises to the cytoplasm. It carries out the reaction IMP + L-aspartate + GTP = N(6)-(1,2-dicarboxyethyl)-AMP + GDP + phosphate + 2 H(+). The protein operates within purine metabolism; AMP biosynthesis via de novo pathway; AMP from IMP: step 1/2. Functionally, plays an important role in the de novo pathway of purine nucleotide biosynthesis. Catalyzes the first committed step in the biosynthesis of AMP from IMP. The chain is Adenylosuccinate synthetase from Allorhizobium ampelinum (strain ATCC BAA-846 / DSM 112012 / S4) (Agrobacterium vitis (strain S4)).